The sequence spans 98 residues: Late cornified envelope-like proline-rich protein 1 (98 aa).

The interval 1-26 is disordered; the sequence is MSSDDKSKSNDPKTEPKNCDPKCEQK.

Belongs to the cornifin (SPRR) family.

In Homo sapiens (Human), this protein is Late cornified envelope-like proline-rich protein 1 (LELP1).